Here is a 459-residue protein sequence, read N- to C-terminus: SLIT-ROBO Rho GTPase-activating protein 2C (459 aa).

The F-BAR domain occupies Lys22–Asp325. The segment covering Leu181–Gln202 has biased composition (basic and acidic residues). A disordered region spans residues Leu181 to Ala211. A coiled-coil region spans residues Gln363–Ile401.

Homodimer. Interacts (via F-BAR domain) with SRGAP2/SRGAP2A (via F-BAR domain); formation of the heterodimer inhibits SRGAP2/SRGAP2A function. As to expression, ubiquitously expressed with higher expression in cerebellum. Probably expressed in fetal and adult neurons (at protein level).

Its function is as follows. Human-specific protein that acts as a key modifier of cortical connectivity in the human brain. Acts by inhibiting the functions of ancestral paralog SRGAP2/SRGAP2A, a postsynaptic protein that regulates excitatory and inhibitory synapse maturation and density in cortical pyramidal neurons. SRGAP2C is unstable but is able to heterodimerize with SRGAP2/SRGAP2A, thereby reducing SRGAP2/SRGAP2A levels through proteasome-dependent degradation. Inhibition of SRGAP2/SRGAP2A by SRGAP2C leads to an increase in synaptic density and protracted synaptic maturation of both excitatory and inhibitory synapses. Modifies cortical circuit connectivity by increasing the number of local and long-range cortical inputs received by layer 2/3 pyramidal neurons. Also able to increase the probability of sensory-evoked responses by layer 2/3 pyramidal neurons. The polypeptide is SLIT-ROBO Rho GTPase-activating protein 2C (Homo sapiens (Human)).